We begin with the raw amino-acid sequence, 721 residues long: Peptide-N(4)-(N-acetyl-beta-glucosaminyl)asparagine amidase (721 aa).

Zn(2+) contacts are provided by Cys-193, Cys-196, Cys-225, and Cys-228. Residue Cys-251 is the Nucleophile of the active site. Catalysis depends on residues His-278 and Asp-295.

This sequence belongs to the transglutaminase-like superfamily. PNGase family. The cofactor is Zn(2+).

The protein resides in the cytoplasm. The catalysed reaction is Hydrolysis of an N(4)-(acetyl-beta-D-glucosaminyl)asparagine residue in which the glucosamine residue may be further glycosylated, to yield a (substituted) N-acetyl-beta-D-glucosaminylamine and a peptide containing an aspartate residue.. Specifically deglycosylates the denatured form of N-linked glycoproteins in the cytoplasm and assists their proteasome-mediated degradation. Cleaves the beta-aspartyl-glucosamine (GlcNAc) of the glycan and the amide side chain of Asn, converting Asn to Asp. Prefers proteins containing high-mannose over those bearing complex type oligosaccharides. Can recognize misfolded proteins in the endoplasmic reticulum that are exported to the cytosol to be destroyed and deglycosylate them, while it has no activity toward native proteins. Deglycosylation is a prerequisite for subsequent proteasome-mediated degradation of some, but not all, misfolded glycoproteins. In Arabidopsis thaliana (Mouse-ear cress), this protein is Peptide-N(4)-(N-acetyl-beta-glucosaminyl)asparagine amidase (PNG1).